The chain runs to 249 residues: Adenosylcobinamide-GDP ribazoletransferase (249 aa).

Transmembrane regions (helical) follow at residues 32–52 (MVAF…TWFG), 53–73 (ATWL…WGAI), 107–127 (IGTM…LFVL), 136–156 (ALIV…FWFP), 190–210 (LLWW…IIIA), and 224–244 (TYGA…AALV).

This sequence belongs to the CobS family. It depends on Mg(2+) as a cofactor.

It is found in the cell membrane. The catalysed reaction is alpha-ribazole + adenosylcob(III)inamide-GDP = adenosylcob(III)alamin + GMP + H(+). The enzyme catalyses alpha-ribazole 5'-phosphate + adenosylcob(III)inamide-GDP = adenosylcob(III)alamin 5'-phosphate + GMP + H(+). The protein operates within cofactor biosynthesis; adenosylcobalamin biosynthesis; adenosylcobalamin from cob(II)yrinate a,c-diamide: step 7/7. Joins adenosylcobinamide-GDP and alpha-ribazole to generate adenosylcobalamin (Ado-cobalamin). Also synthesizes adenosylcobalamin 5'-phosphate from adenosylcobinamide-GDP and alpha-ribazole 5'-phosphate. The polypeptide is Adenosylcobinamide-GDP ribazoletransferase (Herpetosiphon aurantiacus (strain ATCC 23779 / DSM 785 / 114-95)).